Here is a 364-residue protein sequence, read N- to C-terminus: D-alanine--D-alanine ligase A (364 aa).

Residues 145–348 enclose the ATP-grasp domain; that stretch reads KRLLRDAGLN…YTDLISRLIE (204 aa). Position 175–230 (175–230) interacts with ATP; it reads ESRLGLPLFVKPANQGSSVGVSKVANEAQYQQAVALAFEFDHKVVVEQGIKGREIE. Residues D302, E315, and N317 each coordinate Mg(2+).

The protein belongs to the D-alanine--D-alanine ligase family. Requires Mg(2+) as cofactor. The cofactor is Mn(2+).

Its subcellular location is the cytoplasm. The catalysed reaction is 2 D-alanine + ATP = D-alanyl-D-alanine + ADP + phosphate + H(+). It functions in the pathway cell wall biogenesis; peptidoglycan biosynthesis. Functionally, cell wall formation. This Salmonella typhi protein is D-alanine--D-alanine ligase A (ddlA).